A 150-amino-acid polypeptide reads, in one-letter code: SKP1-like protein 17 (150 aa).

An interaction with the F-box domain of F-box proteins region spans residues 92-150; sequence LDAADYLIVIGLKNLIAQAIADYTADKTVNEIRELFNIENDYTPEEEEELRKKNEWAFN.

This sequence belongs to the SKP1 family. Part of a SCF (SKP1-cullin-F-box) protein ligase complex. Interacts with CPR1/CPR30. In terms of tissue distribution, mainly detected in the siliques.

The protein resides in the nucleus. The protein operates within protein modification; protein ubiquitination. Involved in ubiquitination and subsequent proteasomal degradation of target proteins. Together with CUL1, RBX1 and a F-box protein, it forms a SCF E3 ubiquitin ligase complex. The functional specificity of this complex depends on the type of F-box protein. In the SCF complex, it serves as an adapter that links the F-box protein to CUL1. Probably implicated in incompatibility response after hybridization. The protein is SKP1-like protein 17 (ASK17) of Arabidopsis thaliana (Mouse-ear cress).